The chain runs to 803 residues: Phenylalanine--tRNA ligase beta subunit (803 aa).

In terms of domain architecture, tRNA-binding spans 40-150 (SNKFYGIVIA…IDAPIGCNFY (111 aa)). The region spanning 405-480 (PKIKIIKLHR…RIYGYNHIPK (76 aa)) is the B5 domain. Mg(2+)-binding residues include D458 and E468. The FDX-ACB domain occupies 710–803 (SKFPKNYRDI…LKKHFNAIFR (94 aa)).

It belongs to the phenylalanyl-tRNA synthetase beta subunit family. Type 1 subfamily. As to quaternary structure, tetramer of two alpha and two beta subunits. The cofactor is Mg(2+).

It localises to the cytoplasm. It carries out the reaction tRNA(Phe) + L-phenylalanine + ATP = L-phenylalanyl-tRNA(Phe) + AMP + diphosphate + H(+). This Blochmanniella floridana protein is Phenylalanine--tRNA ligase beta subunit.